The sequence spans 274 residues: uncharacterized protein (274 aa).

The segment covering Met1–Asn17 has biased composition (low complexity). Disordered regions lie at residues Met1–Arg38 and Glu222–Glu274. The segment covering Leu18–Gln28 has biased composition (polar residues). Residues Pro29–Arg38 are compositionally biased toward basic and acidic residues. Polar residues-rich tracts occupy residues Pro239–Ile249 and Ser256–Val265.

This is an uncharacterized protein from Caenorhabditis elegans.